We begin with the raw amino-acid sequence, 302 residues long: MTKVNMKVNIAGVELKNPVMTASGTFGSGREYGEYVDLNQLGAVVVKGVANEPWKGNPSPRIAETYGGMLNSVGLQNPGVDEFIEKDIPFLRQYNTKIIVNIAGRTIEDYCEVVKKLGDADVDLLELNISCPNVKAGGVCFGTDPFMVEEVTKAVKKVAKQPLIVKLTPNVTDIVPIAKAAVAGGADGISLINTLLGMAIDIHKRKPILANVMGGFSGPAIKPVALRMVYQVANAVDVPIIGMGGIMTGEDAVEFILAGASGVAVGTANFINPRATIDVIEGIQGYMEQYSIKDLKEIRGSL.

Residues Ser-23 and 47 to 48 (KG) contribute to the FMN site. Substrate is bound by residues Lys-47 and 71–75 (NSVGL). Asn-101 and Asn-128 together coordinate FMN. Residue Asn-128 coordinates substrate. The Nucleophile role is filled by Cys-131. Positions 166 and 192 each coordinate FMN. 193–194 (NT) contacts substrate. Residues Gly-218, 244–245 (GG), and 266–267 (GT) contribute to the FMN site.

The protein belongs to the dihydroorotate dehydrogenase family. Type 1 subfamily. In terms of assembly, heterotetramer of 2 PyrK and 2 PyrD type B subunits. FMN is required as a cofactor.

It localises to the cytoplasm. The enzyme catalyses (S)-dihydroorotate + NAD(+) = orotate + NADH + H(+). It functions in the pathway pyrimidine metabolism; UMP biosynthesis via de novo pathway; orotate from (S)-dihydroorotate (NAD(+) route): step 1/1. In terms of biological role, catalyzes the conversion of dihydroorotate to orotate with NAD(+) as electron acceptor. This is Dihydroorotate dehydrogenase B (NAD(+)), catalytic subunit (pyrD) from Alkaliphilus metalliredigens (strain QYMF).